We begin with the raw amino-acid sequence, 466 residues long: ATP synthase subunit beta (466 aa).

148–155 (GGAGVGKT) provides a ligand contact to ATP.

It belongs to the ATPase alpha/beta chains family. F-type ATPases have 2 components, CF(1) - the catalytic core - and CF(0) - the membrane proton channel. CF(1) has five subunits: alpha(3), beta(3), gamma(1), delta(1), epsilon(1). CF(0) has three main subunits: a(1), b(2) and c(9-12). The alpha and beta chains form an alternating ring which encloses part of the gamma chain. CF(1) is attached to CF(0) by a central stalk formed by the gamma and epsilon chains, while a peripheral stalk is formed by the delta and b chains.

The protein localises to the cell inner membrane. The catalysed reaction is ATP + H2O + 4 H(+)(in) = ADP + phosphate + 5 H(+)(out). In terms of biological role, produces ATP from ADP in the presence of a proton gradient across the membrane. The catalytic sites are hosted primarily by the beta subunits. The polypeptide is ATP synthase subunit beta (Xylella fastidiosa (strain 9a5c)).